Reading from the N-terminus, the 583-residue chain is Chloroplast sensor kinase, chloroplastic (583 aa).

The transit peptide at 1 to 50 (MSSIYLHGLSRRRRIGSVIVAIYMLDSCGAFLSASGSGRYPGFSYRGLSV) directs the protein to the chloroplast. The GAF stretch occupies residues 97–277 (LFQELALSQL…SMDTERAALQ (181 aa)). Residue Cys-115 coordinates [3Fe-4S] cluster. Phosphohistidine; by autocatalysis is present on His-292. Positions 412–442 (AASGSNGPSNSTTSFSGNGSDVSTYTEDDGA) are disordered. Low complexity predominate over residues 414-431 (SGSNGPSNSTTSFSGNGS). The Histidine kinase domain occupies 447–583 (SSLFSEMDLE…ALDWTLRKHW (137 aa)).

It belongs to the chloroplast sensor kinase protein family. As to quaternary structure, oligomerizes. [3Fe-4S] cluster serves as cofactor. In terms of processing, autophosphorylates, possibly on His-292.

The protein localises to the plastid. It localises to the chloroplast stroma. It catalyses the reaction ATP + protein L-histidine = ADP + protein N-phospho-L-histidine.. Sensor kinase that senses the plastoquinone (PQ) redox state involved in stoichiometry adjustment of both photosystems (e.g. long-term adaptation via transcriptional regulation of reaction center genes of photosystems I and II) and state transitions (e.g. short-term adaptation involving reversible post-translational phosphorylation of light-harvesting complex II, LHC II), thus linking photosynthesis with gene expression in chloroplasts. Reduced PQ suppresses its autophosphorylation activity. In Phaeodactylum tricornutum (strain CCAP 1055/1), this protein is Chloroplast sensor kinase, chloroplastic.